Here is a 1867-residue protein sequence, read N- to C-terminus: Probable serine/threonine-protein kinase roco8 (1867 aa).

One can recognise a DEP 1 domain in the interval 16 to 93; sequence SSDGLQIKDR…DDYIFYQFDN (78 aa). Disordered regions lie at residues 96–115 and 121–225; these read NNNN…TTAT and VSTK…NSFN. Low complexity predominate over residues 121–223; it reads VSTKIGSIGK…NSNSTYNSNS (103 aa). One can recognise a DEP 2 domain in the interval 264–342; sequence GDKGLKLQKK…NNNNGGGGVM (79 aa). LRR repeat units follow at residues 491-512, 515-536, 540-561, 563-584, 586-607, 609-631, 633-656, and 657-678; these read RLDD…IINT, FLRI…ESIA, NLES…FSRL, LLTK…VFQL, NLEE…IGSL, SLEK…LGLL, RLKS…STLP, and LLEQ…ITSK. Residues 693 to 941 form the Roc domain; the sequence is GTETLSHIKL…NEIIQTLLNQ (249 aa). Disordered regions lie at residues 763–813 and 942–961; these read QNGI…KKRP and SNNN…KQSN. A compositionally biased stretch (low complexity) spans 768–793; sequence TSSSNLNLSTGTLPPPTQLSSSTSEL. Positions 974 to 1111 constitute a COR domain; it reads PSIYITLETN…ILYTLKNNSN (138 aa). The tract at residues 1163–1207 is disordered; it reads SPSLSLSNSSQSVFTNPNNNNNNKSEQQQQQQQQQQQPQPISTSP. Residues 1456 to 1864 enclose the Protein kinase domain; that stretch reads LIYQEEIGVG…TLNEIKDSTI (409 aa). ATP is bound by residues 1462–1470 and Lys1483; that span reads IGVGGFSRV. The segment at 1509 to 1546 is disordered; it reads SNSSLSISLSSSTSSLSPPIVNNNNNNNNLNNNLNNLN. Asp1721 functions as the Proton acceptor in the catalytic mechanism.

The protein belongs to the protein kinase superfamily. TKL Ser/Thr protein kinase family. ROCO subfamily.

The catalysed reaction is L-seryl-[protein] + ATP = O-phospho-L-seryl-[protein] + ADP + H(+). It carries out the reaction L-threonyl-[protein] + ATP = O-phospho-L-threonyl-[protein] + ADP + H(+). The sequence is that of Probable serine/threonine-protein kinase roco8 (roco8) from Dictyostelium discoideum (Social amoeba).